The chain runs to 265 residues: Esterase claE (265 aa).

Residues serine 121, aspartate 211, and histidine 239 each act as charge relay system in the active site.

It belongs to the LovG family.

It participates in secondary metabolite biosynthesis. Functionally, esterase; part of the cla gene cluster that produces clavatol and ortho-quinone methide. The clavatol biosynthesis cluster cla and the terrestric acid cluster tra are both involved in the production of peniphenones and penilactones. The non-reducing PKS claF is responsible for the formation of clavatol from successive condensations of 3 malonyl-CoA units, presumably with a simple acetyl-CoA starter unit, and 2 methylation steps. The esterase claE probably collaborates with claF by catalyzing the hydrolysis of ACP-bound acyl intermediates to free the ACP from stalled intermediates. The clavatol oxidase claD then converts clavatol to hydroxyclavatol. Spontaneous dehydration of hydroxyclavatol leads to the accumulation of the highly active ortho-quinone methide. On the other hand, the PKS-NRPS hybrid traA is involved in the formation of crustosic acid, with the help of traB and traD. The polyketide synthase module (PKS) of traA is responsible for the synthesis of the polyketide backbone via the condensation of an acetyl-CoA starter unit with 3 malonyl-CoA units. The downstream nonribosomal peptide synthetase (NRPS) module then amidates the carboxyl end of the polyketide with L-malic acid. Because traA lacks a designated enoylreductase (ER) domain, the required activity is provided the enoyl reductase traG. Crustosic acid undergoes decarboxylation and isomerization to the terrestric acid, catalyzed by the 2-oxoglutarate-dependent dioxygenase traH. Both acids are further converted to the 2 gamma-butyrolactones (R)-5-methyltetronic acid and (S)-5-carboxylmethyltetronic acid, with involvement of the cytochrome P450 monooxygenase claJ. Spontaneous addition of the methide to these gamma-butyrolactones leads to peniphenone D and penilactone D, which undergo again stereospecific attacking by methide to give penilactones A and B. This chain is Esterase claE, found in Penicillium crustosum (Blue mold fungus).